We begin with the raw amino-acid sequence, 248 residues long: MKTLILLIQFFTRIPLPIQINMDEINLKKGSALLPFVGVIIGAWNWLIFTLVALVMPLPVAIIAGLFAEVIITGGFHVDALADTADGLFSSRKRERMLEIMKDSRVGANGVIAICFYFLFYGALFLSVTDTQQICWLFFVLPIVAKGVTMLLFAKMTYAGSKEGLGSIFLGVPWWPIVIAQVIVLAVLGLFFSYVGVIAYVGVILFTIIYRAFVYKRIGGMNGDTLGAGGQMGQLICLFCLVLLWGLV.

A run of 7 helical transmembrane segments spans residues 24–44, 70–90, 106–126, 134–154, 168–188, 189–209, and 228–248; these read EINL…IGAW, VIIT…GLFS, VGAN…ALFL, ICWL…LLFA, IFLG…LAVL, GLFF…FTII, and AGGQ…WGLV.

This sequence belongs to the CobS family. Requires Mg(2+) as cofactor.

It is found in the cell membrane. It carries out the reaction alpha-ribazole + adenosylcob(III)inamide-GDP = adenosylcob(III)alamin + GMP + H(+). The catalysed reaction is alpha-ribazole 5'-phosphate + adenosylcob(III)inamide-GDP = adenosylcob(III)alamin 5'-phosphate + GMP + H(+). It participates in cofactor biosynthesis; adenosylcobalamin biosynthesis; adenosylcobalamin from cob(II)yrinate a,c-diamide: step 7/7. Functionally, joins adenosylcobinamide-GDP and alpha-ribazole to generate adenosylcobalamin (Ado-cobalamin). Also synthesizes adenosylcobalamin 5'-phosphate from adenosylcobinamide-GDP and alpha-ribazole 5'-phosphate. The sequence is that of Adenosylcobinamide-GDP ribazoletransferase from Listeria monocytogenes serovar 1/2a (strain ATCC BAA-679 / EGD-e).